A 314-amino-acid chain; its full sequence is 3'-5' exoribonuclease YhaM (314 aa).

An HD domain is found at 163-279; that stretch reads HVVSMLDLAK…LHYIDNLDAK (117 aa).

The protein belongs to the YhaM family.

Shows a 3'-5' exoribonuclease activity. This Bacillus cereus (strain G9842) protein is 3'-5' exoribonuclease YhaM.